The following is a 197-amino-acid chain: RILP-like protein 2 (197 aa).

Positions 14-96 constitute an RH1 domain; sequence EDEGALAKSP…KQEVEGLRRA (83 aa). The stretch at 65 to 153 forms a coiled coil; sequence LEALVNEGSL…VQEELQCYRS (89 aa). Positions 119–184 constitute an RH2 domain; sequence RPRFTLQELR…GNGEKEERTI (66 aa).

In terms of assembly, homodimer. Interacts (via N-terminus) with MYO5A, the interaction is required for its role in dendrite formation. Interacts with RAC1. Interacts with RAB8A; interaction is dependent on the phosphorylation of RAB8A on 'Thr-72'. Interacts with RAB10 and RAB12; interaction is dependent on the phosphorylation of 'Thr-73' on RAB10 and 'Ser-105' on RAB12.

Its subcellular location is the cytoplasm. It localises to the cytosol. It is found in the cytoskeleton. The protein resides in the microtubule organizing center. The protein localises to the centrosome. Its subcellular location is the cell projection. It localises to the cilium. Involved in cell shape and neuronal morphogenesis, positively regulating the establishment and maintenance of dendritic spines. Plays a role in cellular protein transport, including protein transport away from primary cilia. May function via activation of RAC1 and PAK1. This Rattus norvegicus (Rat) protein is RILP-like protein 2 (Rilpl2).